Here is a 114-residue protein sequence, read N- to C-terminus: Putative toxin HigB3 (114 aa).

The protein belongs to the mycobacterial HigB family.

Functionally, putative toxic component of a type II toxin-antitoxin (TA) system. Its cognate antitoxin would be HigA3. Not toxic upon expression in M.smegmatis. The sequence is that of Putative toxin HigB3 from Mycobacterium tuberculosis (strain ATCC 25618 / H37Rv).